We begin with the raw amino-acid sequence, 481 residues long: Coniferyl aldehyde dehydrogenase (481 aa).

Active-site residues include E221 and C255.

It belongs to the aldehyde dehydrogenase family. In terms of assembly, homodimer.

The catalysed reaction is (E)-coniferaldehyde + NADP(+) + H2O = (E)-ferulate + NADPH + 2 H(+). It carries out the reaction (E)-coniferaldehyde + NAD(+) + H2O = (E)-ferulate + NADH + 2 H(+). Functionally, catalyzes the NAD(+)-dependent oxidation of coniferyl aldehyde to ferulic acid and which is induced during growth with eugenol as the carbon source. This is Coniferyl aldehyde dehydrogenase (calB) from Pseudomonas sp. (strain HR199 / DSM 7063).